Consider the following 58-residue polypeptide: Transactivator protein ORF121 (58 aa).

In terms of biological role, stimulates the expression of 39k gene most probably by increasing IE1 expression. In Lepidoptera (butterflies and moths), this protein is Transactivator protein ORF121 (AC121).